Reading from the N-terminus, the 259-residue chain is MQWQDHAIILGVKRLGETSVIAEVMTRDRGRHMGLVRSGRSRSMQPVLQPGNLVEVTWRARLHEHLGEFRMEPVRLRAARLMETATAVYGVQAMGALLRLLPERDPHPYLYDALDVILENMQNPMDAGELFVRFELAVLNELGYGLDLGECAATGVRDDLAFVSPKTGRAVCRTAGAPWADKMLALPPFLAAGTVEAANGESLAAAFRLTGFFLHRHVYEPRGIEIAAAREGFIQAALKAVNAVSLDRPDNPPVIAAKR.

The protein belongs to the RecO family.

In terms of biological role, involved in DNA repair and RecF pathway recombination. This is DNA repair protein RecO from Rhizobium rhizogenes (strain K84 / ATCC BAA-868) (Agrobacterium radiobacter).